Here is a 163-residue protein sequence, read N- to C-terminus: Crossover junction endodeoxyribonuclease RuvC (163 aa).

Residues aspartate 7, glutamate 67, and aspartate 140 contribute to the active site. Residues aspartate 7, glutamate 67, and aspartate 140 each contribute to the Mg(2+) site.

Belongs to the RuvC family. As to quaternary structure, homodimer which binds Holliday junction (HJ) DNA. The HJ becomes 2-fold symmetrical on binding to RuvC with unstacked arms; it has a different conformation from HJ DNA in complex with RuvA. In the full resolvosome a probable DNA-RuvA(4)-RuvB(12)-RuvC(2) complex forms which resolves the HJ. Requires Mg(2+) as cofactor.

The protein resides in the cytoplasm. It catalyses the reaction Endonucleolytic cleavage at a junction such as a reciprocal single-stranded crossover between two homologous DNA duplexes (Holliday junction).. The RuvA-RuvB-RuvC complex processes Holliday junction (HJ) DNA during genetic recombination and DNA repair. Endonuclease that resolves HJ intermediates. Cleaves cruciform DNA by making single-stranded nicks across the HJ at symmetrical positions within the homologous arms, yielding a 5'-phosphate and a 3'-hydroxyl group; requires a central core of homology in the junction. The consensus cleavage sequence is 5'-(A/T)TT(C/G)-3'. Cleavage occurs on the 3'-side of the TT dinucleotide at the point of strand exchange. HJ branch migration catalyzed by RuvA-RuvB allows RuvC to scan DNA until it finds its consensus sequence, where it cleaves and resolves the cruciform DNA. This Desulforamulus reducens (strain ATCC BAA-1160 / DSM 100696 / MI-1) (Desulfotomaculum reducens) protein is Crossover junction endodeoxyribonuclease RuvC.